Reading from the N-terminus, the 340-residue chain is Branched-chain-amino-acid aminotransferase (340 aa).

Position 187 is an N6-(pyridoxal phosphate)lysine (Lys-187).

Belongs to the class-IV pyridoxal-phosphate-dependent aminotransferase family. Pyridoxal 5'-phosphate serves as cofactor.

It catalyses the reaction L-leucine + 2-oxoglutarate = 4-methyl-2-oxopentanoate + L-glutamate. The catalysed reaction is L-isoleucine + 2-oxoglutarate = (S)-3-methyl-2-oxopentanoate + L-glutamate. The enzyme catalyses L-valine + 2-oxoglutarate = 3-methyl-2-oxobutanoate + L-glutamate. Its pathway is amino-acid biosynthesis; L-isoleucine biosynthesis; L-isoleucine from 2-oxobutanoate: step 4/4. It participates in amino-acid biosynthesis; L-leucine biosynthesis; L-leucine from 3-methyl-2-oxobutanoate: step 4/4. It functions in the pathway amino-acid biosynthesis; L-valine biosynthesis; L-valine from pyruvate: step 4/4. Acts on leucine, isoleucine and valine. The protein is Branched-chain-amino-acid aminotransferase (ilvE) of Helicobacter pylori (strain J99 / ATCC 700824) (Campylobacter pylori J99).